Here is a 232-residue protein sequence, read N- to C-terminus: Endonuclease NucS (232 aa).

It belongs to the NucS endonuclease family.

The protein localises to the cytoplasm. Cleaves both 3' and 5' ssDNA extremities of branched DNA structures. The sequence is that of Endonuclease NucS from Mycobacteroides abscessus (strain ATCC 19977 / DSM 44196 / CCUG 20993 / CIP 104536 / JCM 13569 / NCTC 13031 / TMC 1543 / L948) (Mycobacterium abscessus).